The sequence spans 232 residues: Chaperone protein LpfB (232 aa).

Positions 1–23 are cleaved as a signal peptide; the sequence is MNRSRLISCTALVLALIAQNSFA.

It belongs to the periplasmic pilus chaperone family.

The protein localises to the periplasm. Its function is as follows. Required for the biogenesis of long polar fimbria; binds and interact with LpfA. This chain is Chaperone protein LpfB (lpfB), found in Salmonella typhimurium (strain LT2 / SGSC1412 / ATCC 700720).